The sequence spans 136 residues: Beta-hordothionin (136 aa).

The N-terminal stretch at 1–27 (MGSKGLKGVMVCLLILGLVLEHVQVEG) is a signal peptide. 4 disulfide bridges follow: cysteine 30-cysteine 66, cysteine 31-cysteine 58, cysteine 39-cysteine 56, and cysteine 43-cysteine 52. A propeptide spans 73–136 (LALVSNSDEP…GDVGLTSLTA (64 aa)) (acidic domain).

It belongs to the plant thionin (TC 1.C.44) family. 4 C-C subfamily. Homodimer.

Its subcellular location is the secreted. Its function is as follows. Thionins are small plant proteins which are toxic to animal cells. They seem to exert their toxic effect at the level of the cell membrane. Their precise function is not known. In Hordeum vulgare (Barley), this protein is Beta-hordothionin (THI1.2).